Consider the following 195-residue polypeptide: ATP-dependent Clp protease proteolytic subunit 2 (195 aa).

Serine 98 acts as the Nucleophile in catalysis. The active site involves histidine 123.

This sequence belongs to the peptidase S14 family. As to quaternary structure, fourteen ClpP subunits assemble into 2 heptameric rings which stack back to back to give a disk-like structure with a central cavity, resembling the structure of eukaryotic proteasomes.

The protein resides in the cytoplasm. It carries out the reaction Hydrolysis of proteins to small peptides in the presence of ATP and magnesium. alpha-casein is the usual test substrate. In the absence of ATP, only oligopeptides shorter than five residues are hydrolyzed (such as succinyl-Leu-Tyr-|-NHMec, and Leu-Tyr-Leu-|-Tyr-Trp, in which cleavage of the -Tyr-|-Leu- and -Tyr-|-Trp bonds also occurs).. In terms of biological role, cleaves peptides in various proteins in a process that requires ATP hydrolysis. Has a chymotrypsin-like activity. Plays a major role in the degradation of misfolded proteins. In Rhodopirellula baltica (strain DSM 10527 / NCIMB 13988 / SH1), this protein is ATP-dependent Clp protease proteolytic subunit 2.